The chain runs to 168 residues: Alkyl hydroperoxide reductase C (168 aa).

A Thioredoxin domain is found at 1-138; it reads EFIEVSEESF…LVNKIKAAQY (138 aa). Residue C28 is the Cysteine sulfenic acid (-SOH) intermediate of the active site.

Belongs to the peroxiredoxin family. AhpC/Prx1 subfamily. Homodimer; disulfide-linked, upon oxidation. 5 homodimers assemble to form a ring-like decamer.

The protein resides in the cytoplasm. The catalysed reaction is a hydroperoxide + NADH + H(+) = an alcohol + NAD(+) + H2O. Thiol-specific peroxidase that catalyzes the reduction of hydrogen peroxide and organic hydroperoxides to water and alcohols, respectively. Plays a role in cell protection against oxidative stress by detoxifying peroxides. The sequence is that of Alkyl hydroperoxide reductase C from Ferdinandcohnia aciditolerans (strain JCM 32973 / CCTCC AB 2017280 / YN-1) (Bacillus aciditolerans).